The sequence spans 339 residues: Peroxidase 29 (339 aa).

An N-terminal signal peptide occupies residues 1–28 (MKPKSKVAESTAASCFLVMSLLCSCIIG). 4 cysteine pairs are disulfide-bonded: Cys-47–Cys-127, Cys-80–Cys-85, Cys-133–Cys-335, and Cys-213–Cys-242. The active-site Proton acceptor is the His-78. Residues Asp-79, Val-82, Gly-84, Asp-86, and Ser-88 each coordinate Ca(2+). Residue Pro-176 coordinates substrate. His-206 provides a ligand contact to heme b. Ca(2+) is bound at residue Thr-207. A glycan (N-linked (GlcNAc...) asparagine) is linked at Asn-224. Ca(2+) is bound by residues Asp-260, Thr-262, and Asp-267.

Belongs to the peroxidase family. Classical plant (class III) peroxidase subfamily. Heme b is required as a cofactor. It depends on Ca(2+) as a cofactor.

It localises to the secreted. It catalyses the reaction 2 a phenolic donor + H2O2 = 2 a phenolic radical donor + 2 H2O. Functionally, removal of H(2)O(2), oxidation of toxic reductants, biosynthesis and degradation of lignin, suberization, auxin catabolism, response to environmental stresses such as wounding, pathogen attack and oxidative stress. These functions might be dependent on each isozyme/isoform in each plant tissue. This chain is Peroxidase 29 (PER29), found in Arabidopsis thaliana (Mouse-ear cress).